The primary structure comprises 487 residues: Acetyl-coenzyme A carboxylase carboxyl transferase subunit beta, chloroplastic (487 aa).

In terms of domain architecture, CoA carboxyltransferase N-terminal spans 223-487 (LWVQCENCYG…LHAFFPLNQN (265 aa)). 4 residues coordinate Zn(2+): Cys227, Cys230, Cys246, and Cys249. The C4-type zinc finger occupies 227 to 249 (CENCYGLNYKKSFKSKMNLCEQC).

The protein belongs to the AccD/PCCB family. Acetyl-CoA carboxylase is a heterohexamer composed of biotin carboxyl carrier protein, biotin carboxylase and 2 subunits each of ACCase subunit alpha and ACCase plastid-coded subunit beta (accD). The cofactor is Zn(2+).

It is found in the plastid. It localises to the chloroplast stroma. It carries out the reaction N(6)-carboxybiotinyl-L-lysyl-[protein] + acetyl-CoA = N(6)-biotinyl-L-lysyl-[protein] + malonyl-CoA. It functions in the pathway lipid metabolism; malonyl-CoA biosynthesis; malonyl-CoA from acetyl-CoA: step 1/1. Its function is as follows. Component of the acetyl coenzyme A carboxylase (ACC) complex. Biotin carboxylase (BC) catalyzes the carboxylation of biotin on its carrier protein (BCCP) and then the CO(2) group is transferred by the transcarboxylase to acetyl-CoA to form malonyl-CoA. This chain is Acetyl-coenzyme A carboxylase carboxyl transferase subunit beta, chloroplastic, found in Panax ginseng (Korean ginseng).